The chain runs to 301 residues: Aspartate carbamoyltransferase catalytic subunit (301 aa).

Carbamoyl phosphate contacts are provided by R54 and T55. Residue K82 participates in L-aspartate binding. Positions 104, 132, and 135 each coordinate carbamoyl phosphate. Positions 165 and 217 each coordinate L-aspartate. Carbamoyl phosphate contacts are provided by G257 and P258.

Belongs to the aspartate/ornithine carbamoyltransferase superfamily. ATCase family. In terms of assembly, heterododecamer (2C3:3R2) of six catalytic PyrB chains organized as two trimers (C3), and six regulatory PyrI chains organized as three dimers (R2).

The enzyme catalyses carbamoyl phosphate + L-aspartate = N-carbamoyl-L-aspartate + phosphate + H(+). It participates in pyrimidine metabolism; UMP biosynthesis via de novo pathway; (S)-dihydroorotate from bicarbonate: step 2/3. Catalyzes the condensation of carbamoyl phosphate and aspartate to form carbamoyl aspartate and inorganic phosphate, the committed step in the de novo pyrimidine nucleotide biosynthesis pathway. The polypeptide is Aspartate carbamoyltransferase catalytic subunit (Thermus aquaticus).